Consider the following 163-residue polypeptide: uncharacterized protein (163 aa).

A coiled-coil region spans residues 101 to 162; sequence LESMKVERKP…KMGERILERE (62 aa).

This is an uncharacterized protein from Aquifex aeolicus (strain VF5).